The sequence spans 170 residues: Small ribosomal subunit protein uS5 (170 aa).

Residues Leu13–Val76 enclose the S5 DRBM domain.

The protein belongs to the universal ribosomal protein uS5 family. As to quaternary structure, part of the 30S ribosomal subunit. Contacts proteins S4 and S8.

Its function is as follows. With S4 and S12 plays an important role in translational accuracy. Functionally, located at the back of the 30S subunit body where it stabilizes the conformation of the head with respect to the body. This is Small ribosomal subunit protein uS5 from Nitrosococcus oceani (strain ATCC 19707 / BCRC 17464 / JCM 30415 / NCIMB 11848 / C-107).